The chain runs to 215 residues: Adenylate kinase (215 aa).

An ATP-binding site is contributed by 10–15 (GSGKGT). Residues 30 to 59 (STGDLFRTNIENDTPLGKEIKQIVENGQLV) are NMP. Residues Thr31, Arg36, 57–59 (QLV), 85–88 (GFPR), and Gln92 each bind AMP. Residues 121-158 (GRRICQSCCKIFNIYTLPTKEKEICDFCQGILYQRKDD) are LID. Arg122 is a binding site for ATP. Positions 125 and 128 each coordinate Zn(2+). 131-132 (IF) provides a ligand contact to ATP. Positions 145 and 148 each coordinate Zn(2+). Positions 155 and 166 each coordinate AMP. An ATP-binding site is contributed by Lys194.

Belongs to the adenylate kinase family. Monomer.

It is found in the cytoplasm. The enzyme catalyses AMP + ATP = 2 ADP. The protein operates within purine metabolism; AMP biosynthesis via salvage pathway; AMP from ADP: step 1/1. Its function is as follows. Catalyzes the reversible transfer of the terminal phosphate group between ATP and AMP. Plays an important role in cellular energy homeostasis and in adenine nucleotide metabolism. The protein is Adenylate kinase of Borrelia recurrentis (strain A1).